The chain runs to 409 residues: uncharacterized protein (409 aa).

A run of 10 helical transmembrane segments spans residues 62–82 (FSLG…WVWI), 100–120 (LLLF…PEAF), 123–143 (MGLL…LFAL), 152–172 (ASFM…TFWI), 183–203 (VVLW…RYWV), 252–272 (GTPW…WIYF), 293–313 (AQYL…FTAV), 328–348 (YNFA…TMWM), 355–375 (VLPY…TLVP), and 376–396 (FVAN…VAVW).

The protein resides in the cell membrane. This is an uncharacterized protein from Rhizobium meliloti (strain 1021) (Ensifer meliloti).